Reading from the N-terminus, the 183-residue chain is Peptide methionine sulfoxide reductase MsrA 1 (183 aa).

Residue C12 is part of the active site.

Belongs to the MsrA Met sulfoxide reductase family.

The enzyme catalyses L-methionyl-[protein] + [thioredoxin]-disulfide + H2O = L-methionyl-(S)-S-oxide-[protein] + [thioredoxin]-dithiol. The catalysed reaction is [thioredoxin]-disulfide + L-methionine + H2O = L-methionine (S)-S-oxide + [thioredoxin]-dithiol. Its function is as follows. Has an important function as a repair enzyme for proteins that have been inactivated by oxidation. Catalyzes the reversible oxidation-reduction of methionine sulfoxide in proteins to methionine. This chain is Peptide methionine sulfoxide reductase MsrA 1 (msrA1), found in Lactococcus lactis subsp. lactis (strain IL1403) (Streptococcus lactis).